The sequence spans 464 residues: 3-isopropylmalate dehydratase large subunit (464 aa).

3 residues coordinate [4Fe-4S] cluster: Cys-337, Cys-397, and Cys-400.

It belongs to the aconitase/IPM isomerase family. LeuC type 1 subfamily. As to quaternary structure, heterodimer of LeuC and LeuD. [4Fe-4S] cluster is required as a cofactor.

The catalysed reaction is (2R,3S)-3-isopropylmalate = (2S)-2-isopropylmalate. It participates in amino-acid biosynthesis; L-leucine biosynthesis; L-leucine from 3-methyl-2-oxobutanoate: step 2/4. Its function is as follows. Catalyzes the isomerization between 2-isopropylmalate and 3-isopropylmalate, via the formation of 2-isopropylmaleate. The polypeptide is 3-isopropylmalate dehydratase large subunit (Bacillus cereus (strain ATCC 14579 / DSM 31 / CCUG 7414 / JCM 2152 / NBRC 15305 / NCIMB 9373 / NCTC 2599 / NRRL B-3711)).